The following is a 263-amino-acid chain: Indolethylamine N-methyltransferase (263 aa).

Lysine 13 is modified (N6-succinyllysine). Residues tyrosine 20, tyrosine 25, glycine 63, tyrosine 69, 85–87, and asparagine 90 contribute to the S-adenosyl-L-methionine site; that span reads DFT. An N6-succinyllysine modification is found at lysine 96. Residues 142–143 and leucine 163 contribute to the S-adenosyl-L-methionine site; that span reads DV.

Belongs to the class I-like SAM-binding methyltransferase superfamily. NNMT/PNMT/TEMT family. Monomer. In terms of tissue distribution, widely expressed. The highest levels were in thyroid, adrenal gland, adult and fetal lung. Intermediate levels in heart, placenta, skeletal muscle, testis, small intestine, pancreas, stomach, spinal cord, lymph node and trachea. Very low levels in adult and fetal kidney and liver, in adult spleen, thymus, ovary, colon and bone marrow. Not expressed in peripheral blood leukocytes and brain.

The protein resides in the cytoplasm. The catalysed reaction is a tertiary amine + S-adenosyl-L-methionine = a methylated tertiary amine + S-adenosyl-L-homocysteine + H(+). The enzyme catalyses a secondary amine + S-adenosyl-L-methionine = a methylated secondary amine + S-adenosyl-L-homocysteine + H(+). It carries out the reaction a primary amine + S-adenosyl-L-methionine = a methylated primary amine + S-adenosyl-L-homocysteine + H(+). It catalyses the reaction dimethyl sulfide + S-adenosyl-L-methionine = trimethylsulfonium + S-adenosyl-L-homocysteine. Its function is as follows. Functions as a thioether S-methyltransferase and is active with a variety of thioethers and the corresponding selenium and tellurium compounds, including 3-methylthiopropionaldehyde, dimethyl selenide, dimethyl telluride, 2-methylthioethylamine, 2-methylthioethanol, methyl-n-propyl sulfide and diethyl sulfide. Plays an important role in the detoxification of selenium compounds. Catalyzes the N-methylation of tryptamine and structurally related compounds. The sequence is that of Indolethylamine N-methyltransferase (INMT) from Homo sapiens (Human).